The sequence spans 138 residues: Putative pre-16S rRNA nuclease (138 aa).

It belongs to the YqgF nuclease family.

It is found in the cytoplasm. Could be a nuclease involved in processing of the 5'-end of pre-16S rRNA. The protein is Putative pre-16S rRNA nuclease of Glaesserella parasuis serovar 5 (strain SH0165) (Haemophilus parasuis).